Reading from the N-terminus, the 225-residue chain is ATP-dependent Clp protease proteolytic subunit (225 aa).

Ser123 serves as the catalytic Nucleophile. Residue His148 is part of the active site.

It belongs to the peptidase S14 family. Fourteen ClpP subunits assemble into 2 heptameric rings which stack back to back to give a disk-like structure with a central cavity, resembling the structure of eukaryotic proteasomes.

It is found in the cytoplasm. It carries out the reaction Hydrolysis of proteins to small peptides in the presence of ATP and magnesium. alpha-casein is the usual test substrate. In the absence of ATP, only oligopeptides shorter than five residues are hydrolyzed (such as succinyl-Leu-Tyr-|-NHMec, and Leu-Tyr-Leu-|-Tyr-Trp, in which cleavage of the -Tyr-|-Leu- and -Tyr-|-Trp bonds also occurs).. Functionally, cleaves peptides in various proteins in a process that requires ATP hydrolysis. Has a chymotrypsin-like activity. Plays a major role in the degradation of misfolded proteins. This is ATP-dependent Clp protease proteolytic subunit from Chlorobium luteolum (strain DSM 273 / BCRC 81028 / 2530) (Pelodictyon luteolum).